We begin with the raw amino-acid sequence, 263 residues long: Translation initiation factor 2 subunit alpha (263 aa).

Positions 12–83 (GEILIATVKQ…RKGTIDVSLK (72 aa)) constitute an S1 motif domain.

It belongs to the eIF-2-alpha family. Heterotrimer composed of an alpha, a beta and a gamma chain.

EIF-2 functions in the early steps of protein synthesis by forming a ternary complex with GTP and initiator tRNA. The polypeptide is Translation initiation factor 2 subunit alpha (Sulfurisphaera tokodaii (strain DSM 16993 / JCM 10545 / NBRC 100140 / 7) (Sulfolobus tokodaii)).